A 464-amino-acid polypeptide reads, in one-letter code: Protein FAM90A5 (464 aa).

Disordered stretches follow at residues 16-42, 70-389, and 415-437; these read RAQT…DPRL, PATL…HDGA, and HSPE…SEAP. Composition is skewed to basic and acidic residues over residues 74–89 and 97–114; these read GKKE…KPRV and NKDK…DPQR. Residues 180-197 show a composition bias toward low complexity; sequence LASLSPLRKASLSSSSSL.

Belongs to the FAM90 family.

In Homo sapiens (Human), this protein is Protein FAM90A5.